Here is a 452-residue protein sequence, read N- to C-terminus: Glutamate--tRNA ligase 2 (452 aa).

Residues 8–18 carry the 'HIGH' region motif; that stretch reads PSPTGRLHVGN. Residues 246–250 carry the 'KMSKS' region motif; that stretch reads KLSKR. Residue lysine 249 participates in ATP binding.

Belongs to the class-I aminoacyl-tRNA synthetase family. Glutamate--tRNA ligase type 1 subfamily. As to quaternary structure, monomer.

It localises to the cytoplasm. The enzyme catalyses tRNA(Glu) + L-glutamate + ATP = L-glutamyl-tRNA(Glu) + AMP + diphosphate. Catalyzes the attachment of glutamate to tRNA(Glu) in a two-step reaction: glutamate is first activated by ATP to form Glu-AMP and then transferred to the acceptor end of tRNA(Glu). This Erythrobacter litoralis (strain HTCC2594) protein is Glutamate--tRNA ligase 2.